The following is a 2069-amino-acid chain: Dedicator of cytokinesis protein 9 (2069 aa).

Ser21, Ser32, Ser167, and Ser170 each carry phosphoserine. Residues 174 to 281 (GITKHGWLYK…WITILNKILQ (108 aa)) form the PH domain. The tract at residues 290–313 (EKRNGDSHEDDEQSKLEGSGSGLD) is disordered. Ser433 and Ser443 each carry phosphoserine. The region spanning 640 to 818 (TNHLYVYPKY…PLLKISTHLV (179 aa)) is the C2 DOCK-type domain. A phosphoserine mark is found at Ser927 and Ser1235. Thr1241 is modified (phosphothreonine). The disordered stretch occupies residues 1241–1282 (TPNINSVRNADSRGSLISTDSGNSLPERNSEKSNSLDKHQQS). Phosphoserine occurs at positions 1255, 1261, and 1264. Polar residues predominate over residues 1255-1267 (SLISTDSGNSLPE). Residues 1268-1280 (RNSEKSNSLDKHQ) are compositionally biased toward basic and acidic residues. The DOCKER domain occupies 1605-2069 (KSYASTPELR…LSEIMHEQLG (465 aa)). The tract at residues 1693 to 2069 (DEEASMMEDV…LSEIMHEQLG (377 aa)) is interaction with CDC42. Coiled-coil stretches lie at residues 1948–1982 (IEVA…KLQG) and 2034–2067 (NERL…MHEQ).

It belongs to the DOCK family. As to quaternary structure, homodimer. Interacts preferentially with nucleotide-depleted CDC42. As to expression, widely expressed, with highest expression in heart and placenta. Expressed at intermediate level in kidney, brain, lung and skeletal muscle.

The protein resides in the endomembrane system. Functionally, guanine nucleotide-exchange factor (GEF) that activates CDC42 by exchanging bound GDP for free GTP. Overexpression induces filopodia formation. The polypeptide is Dedicator of cytokinesis protein 9 (Homo sapiens (Human)).